A 26-amino-acid chain; its full sequence is Aralin B chain (26 aa).

Disulfide-linked dimer of A and B chains. Post-translationally, glycosylated. High-mannose type oligosaccharides.

Functionally, lectin specific for galactose (Gal) and its derivatives. Induces apoptosis. Has cytotoxic activity against several human cancer cell lines. Is less cytotoxic to normal human cells. The polypeptide is Aralin B chain (Aralia elata (Japanese angelica tree)).